We begin with the raw amino-acid sequence, 412 residues long: Aspartate kinase Ask_LysC (412 aa).

One can recognise an ACT domain in the interval 265–332 (LTIRGVPDTP…QGIAAEMGAR (68 aa)).

This sequence belongs to the aspartokinase family.

Its subcellular location is the cytoplasm. The catalysed reaction is L-aspartate + ATP = 4-phospho-L-aspartate + ADP. Its pathway is amino-acid biosynthesis; L-lysine biosynthesis via DAP pathway; (S)-tetrahydrodipicolinate from L-aspartate: step 1/4. The protein operates within amino-acid biosynthesis; L-methionine biosynthesis via de novo pathway; L-homoserine from L-aspartate: step 1/3. It participates in amino-acid biosynthesis; L-threonine biosynthesis; L-threonine from L-aspartate: step 1/5. Its activity is regulated as follows. Allosterically and strongly feedback inhibited by tryptophan. Addition of lysine alone slightly enhances activity. The simultaneous addition of lysine and tryptophan leads to very strong feedback inhibition of the enzyme. The feedback control by tryptophan is reduced in the presence of the compatible solutes hydroxyectoine or ectoine. Involved in the biosynthesis of L-aspartate-beta-semialdehyde which is a central intermediate in the biosynthesis of different amino acids (L-lysine, L-methionine, L-threonine). Catalyzes the phosphorylation of the beta-carboxyl group of L-aspartate to yield 4-phospho-L-aspartate. This chain is Aspartate kinase Ask_LysC (lysC), found in Stutzerimonas stutzeri (strain A1501) (Pseudomonas stutzeri).